The sequence spans 628 residues: tRNA uridine 5-carboxymethylaminomethyl modification enzyme MnmG (628 aa).

Position 13 to 18 (13 to 18) interacts with FAD; that stretch reads GAGHAG. 273–287 contributes to the NAD(+) binding site; that stretch reads GPRYCPSIEDKIVRF.

This sequence belongs to the MnmG family. Homodimer. Heterotetramer of two MnmE and two MnmG subunits. FAD serves as cofactor.

It localises to the cytoplasm. NAD-binding protein involved in the addition of a carboxymethylaminomethyl (cmnm) group at the wobble position (U34) of certain tRNAs, forming tRNA-cmnm(5)s(2)U34. The chain is tRNA uridine 5-carboxymethylaminomethyl modification enzyme MnmG from Buchnera aphidicola subsp. Acyrthosiphon pisum (strain 5A).